The sequence spans 388 residues: Succinate--CoA ligase [ADP-forming] subunit beta (388 aa).

The region spanning 9–244 is the ATP-grasp domain; sequence KQLFARSGLP…QSQEDPREAQ (236 aa). Residues K46, 53 to 55, E99, T102, and E107 contribute to the ATP site; that span reads GRG. The Mg(2+) site is built by N199 and D213. Substrate contacts are provided by residues N264 and 321 to 323; that span reads GIV.

This sequence belongs to the succinate/malate CoA ligase beta subunit family. As to quaternary structure, heterotetramer of two alpha and two beta subunits. Mg(2+) serves as cofactor.

It catalyses the reaction succinate + ATP + CoA = succinyl-CoA + ADP + phosphate. The enzyme catalyses GTP + succinate + CoA = succinyl-CoA + GDP + phosphate. The protein operates within carbohydrate metabolism; tricarboxylic acid cycle; succinate from succinyl-CoA (ligase route): step 1/1. Functionally, succinyl-CoA synthetase functions in the citric acid cycle (TCA), coupling the hydrolysis of succinyl-CoA to the synthesis of either ATP or GTP and thus represents the only step of substrate-level phosphorylation in the TCA. The beta subunit provides nucleotide specificity of the enzyme and binds the substrate succinate, while the binding sites for coenzyme A and phosphate are found in the alpha subunit. This Cronobacter sakazakii (strain ATCC BAA-894) (Enterobacter sakazakii) protein is Succinate--CoA ligase [ADP-forming] subunit beta.